Consider the following 728-residue polypeptide: Dehydrocurvularin biosynthesis regulator (728 aa).

The zn(2)-C6 fungal-type DNA-binding region spans 28–58 (CWECKRRKMKCRFDPRIASACNGCRRRGSPC). Disordered regions lie at residues 75-130 (GTTS…TSQR) and 606-626 (QHAT…NSDA). The span at 89–109 (RATTPSERTDQILTPVSTVRE) shows a compositional bias: polar residues.

Its subcellular location is the nucleus. Transcription factor involved in regulation of the dehydrocurvularin biosynthesis gene cluster. The protein is Dehydrocurvularin biosynthesis regulator of Aspergillus terreus.